The following is a 112-amino-acid chain: MYPIVRLAMVRGHRVFAARRLDKGPPEWLAYVEKSPRLRQKLPTSCRNQAGCPFLGFRRGANRWWVGRCEGNTEGVAVYDSLWGSRGNGPPMLDHKMWGEGSYGSSAEISMC.

This is an uncharacterized protein from Gallus gallus (Chicken).